The chain runs to 225 residues: UPF0758 protein XAC3915 (225 aa).

The MPN domain occupies 102–224; it reads ALSDPPSVGR…PVSFAERGWL (123 aa). Zn(2+)-binding residues include H173, H175, and D186. Positions 173–186 match the JAMM motif motif; the sequence is HNHPSGNPEPSEAD.

It belongs to the UPF0758 family.

In Xanthomonas axonopodis pv. citri (strain 306), this protein is UPF0758 protein XAC3915.